The primary structure comprises 375 residues: Dual specificity protein phosphatase 4 (375 aa).

Residues 25–143 (SGGRCLLLDC…FASEYPEFCA (119 aa)) form the Rhodanese domain. The 142-residue stretch at 176–317 (GPVEILPFLY…LLQFESQVLA (142 aa)) folds into the Tyrosine-protein phosphatase domain. Residue Cys261 is the Phosphocysteine intermediate of the active site.

The protein belongs to the protein-tyrosine phosphatase family. Non-receptor class dual specificity subfamily.

The protein localises to the nucleus. The catalysed reaction is O-phospho-L-tyrosyl-[protein] + H2O = L-tyrosyl-[protein] + phosphate. The enzyme catalyses O-phospho-L-seryl-[protein] + H2O = L-seryl-[protein] + phosphate. It carries out the reaction O-phospho-L-threonyl-[protein] + H2O = L-threonyl-[protein] + phosphate. Regulates mitogenic signal transduction by dephosphorylating both Thr and Tyr residues on MAP kinases ERK1 and ERK2. The protein is Dual specificity protein phosphatase 4 (DUSP4) of Gallus gallus (Chicken).